The sequence spans 149 residues: Calmodulin-1 (149 aa).

The residue at position 2 (alanine 2) is an N-acetylalanine. 4 consecutive EF-hand domains span residues 8-43 (DQIAEFKEAFSLFDKDGDGCITTKELGTVMRSLGQN), 44-79 (PTEAELQDMINEVDADGNGTIDFPEFLNLMARKMKD), 81-116 (DSEEELKEAFRVFDKDQNGFISAAELRHVMTNLGEK), and 117-149 (LTDEEVDEMIREADVDGDGQINYEEFVKVMMAK). 14 residues coordinate Ca(2+): aspartate 21, aspartate 23, aspartate 25, cysteine 27, glutamate 32, aspartate 57, aspartate 59, asparagine 61, threonine 63, glutamate 68, aspartate 94, aspartate 96, asparagine 98, and glutamate 105. At lysine 116 the chain carries N6,N6,N6-trimethyllysine. Residues aspartate 130, aspartate 132, aspartate 134, glutamine 136, and glutamate 141 each coordinate Ca(2+).

It belongs to the calmodulin family.

Calmodulin mediates the control of a large number of enzymes, ion channels and other proteins by Ca(2+). Among the enzymes to be stimulated by the calmodulin-Ca(2+) complex are a number of protein kinases and phosphatases. In Oryza sativa subsp. indica (Rice), this protein is Calmodulin-1 (CAM1-1).